A 412-amino-acid chain; its full sequence is Serine hydroxymethyltransferase (412 aa).

(6S)-5,6,7,8-tetrahydrofolate contacts are provided by residues Leu-117 and 121–123; that span reads GHL. Residue Lys-226 is modified to N6-(pyridoxal phosphate)lysine.

The protein belongs to the SHMT family. As to quaternary structure, homodimer. It depends on pyridoxal 5'-phosphate as a cofactor.

The protein resides in the cytoplasm. It catalyses the reaction (6R)-5,10-methylene-5,6,7,8-tetrahydrofolate + glycine + H2O = (6S)-5,6,7,8-tetrahydrofolate + L-serine. It functions in the pathway one-carbon metabolism; tetrahydrofolate interconversion. The protein operates within amino-acid biosynthesis; glycine biosynthesis; glycine from L-serine: step 1/1. Its function is as follows. Catalyzes the reversible interconversion of serine and glycine with tetrahydrofolate (THF) serving as the one-carbon carrier. This reaction serves as the major source of one-carbon groups required for the biosynthesis of purines, thymidylate, methionine, and other important biomolecules. Also exhibits THF-independent aldolase activity toward beta-hydroxyamino acids, producing glycine and aldehydes, via a retro-aldol mechanism. In Staphylococcus aureus (strain MW2), this protein is Serine hydroxymethyltransferase.